Reading from the N-terminus, the 1320-residue chain is Collagen alpha-1(XX) chain (1320 aa).

The first 25 residues, 1 to 25 (MSLQGSYQHFCLWMFLGTTLALGQG), serve as a signal peptide directing secretion. A Fibronectin type-III 1 domain is found at 27–118 (VSSRLRLAVL…EFVIEDLKSQ (92 aa)). The VWFA domain occupies 177–352 (DIIFLVDGSW…DTLAPLLSRL (176 aa)). Fibronectin type-III domains are found at residues 377–466 (TPTR…APLP), 467–556 (PPGP…SALG), 557–644 (PPRH…TQKA), 646–735 (SPGQ…TPSA), and 740–831 (PPSS…ACPA). N-linked (GlcNAc...) asparagine glycosylation is present at Asn-433. N-linked (GlcNAc...) asparagine glycosylation is found at Asn-569 and Asn-604. The tract at residues 728–752 (SLRYTPSAASRSPPSSLALSSETPN) is disordered. Positions 733 to 748 (PSAASRSPPSSLALSS) are enriched in low complexity. Asn-771 is a glycosylation site (N-linked (GlcNAc...) asparagine). Positions 840–1035 (GFDLMVAFGL…LQMLQIVCSD (196 aa)) constitute a Laminin G-like domain. 2 disordered regions span residues 1064–1220 (YSSE…EKGE) and 1291–1320 (LRPE…ESLE). Pro residues predominate over residues 1069 to 1080 (PGPPGPQGPPGL). Collagen-like domains follow at residues 1069–1122 (PGPP…TQGR), 1125–1174 (QGPM…GPAG), and 1165–1221 (GMRG…KGEP). Residues 1081-1093 (PGRNGPPGQQGHP) are compositionally biased toward low complexity. Residues 1106-1115 (GPEGPGGQQG) show a composition bias toward gly residues. The segment covering 1140–1152 (QGLSGLQGLSGQQ) has biased composition (low complexity). A compositionally biased stretch (polar residues) spans 1302–1320 (ISHTSNPRLQEVQTPESLE).

The protein resides in the secreted. Its subcellular location is the extracellular space. In terms of biological role, probable collagen protein. The polypeptide is Collagen alpha-1(XX) chain (Col20a1) (Mus musculus (Mouse)).